A 146-amino-acid chain; its full sequence is Hemoglobin subunit beta (146 aa).

A Globin domain is found at Glu2–His146. Heme b contacts are provided by His63 and His92.

The protein belongs to the globin family. Heterotetramer of two alpha chains and two beta chains. In terms of tissue distribution, red blood cells.

Its function is as follows. Involved in oxygen transport from gills to the various peripheral tissues. The protein is Hemoglobin subunit beta (hbb) of Thunnus thynnus (Atlantic bluefin tuna).